Consider the following 151-residue polypeptide: UPF0208 membrane protein YPTB2595 (151 aa).

2 consecutive transmembrane segments (helical) span residues 46–66 and 69–89; these read FGIR…IALG and LGPA…GLWW.

It belongs to the UPF0208 family.

It is found in the cell inner membrane. The protein is UPF0208 membrane protein YPTB2595 of Yersinia pseudotuberculosis serotype I (strain IP32953).